We begin with the raw amino-acid sequence, 93 residues long: uncharacterized protein (93 aa).

This is an uncharacterized protein from Schizosaccharomyces pombe (strain 972 / ATCC 24843) (Fission yeast).